Reading from the N-terminus, the 142-residue chain is Hemoglobin subunit alpha (142 aa).

Residues 2–142 (VLSANDKSNV…VGNVLTSKYR (141 aa)) enclose the Globin domain. His-59 is an O2 binding site. Position 88 (His-88) interacts with heme b.

The protein belongs to the globin family. As to quaternary structure, heterotetramer of two alpha chains and two beta chains. Red blood cells.

In terms of biological role, involved in oxygen transport from the lung to the various peripheral tissues. The sequence is that of Hemoglobin subunit alpha (HBA) from Aptenodytes forsteri (Emperor penguin).